Consider the following 1551-residue polypeptide: Pentafunctional AROM polypeptide 1 (1551 aa).

The 3-dehydroquinate synthase stretch occupies residues M1–K379. Residues D42 to N44, E80 to K83, G111 to V113, and D116 contribute to the NAD(+) site. R127 is a 7-phospho-2-dehydro-3-deoxy-D-arabino-heptonate binding site. T136 to T137 lines the NAD(+) pocket. 7-phospho-2-dehydro-3-deoxy-D-arabino-heptonate contacts are provided by D143 and K149. Residue K158 coordinates NAD(+). N159 contacts 7-phospho-2-dehydro-3-deoxy-D-arabino-heptonate. NAD(+) is bound by residues F176–T179 and N187. E191 contacts Zn(2+). 7-phospho-2-dehydro-3-deoxy-D-arabino-heptonate-binding positions include E191–K194 and K243. The active-site Proton acceptor; for 3-dehydroquinate synthase activity is E253. Residues R257–N261 and H264 contribute to the 7-phospho-2-dehydro-3-deoxy-D-arabino-heptonate site. H264 is a Zn(2+) binding site. H268 functions as the Proton acceptor; for 3-dehydroquinate synthase activity in the catalytic mechanism. H280 and K351 together coordinate 7-phospho-2-dehydro-3-deoxy-D-arabino-heptonate. H280 is a binding site for Zn(2+). Residues V392 to A835 are EPSP synthase. Residues D854–T1044 are shikimate kinase. G861–T868 lines the ATP pocket. The segment at L1045 to E1258 is 3-dehydroquinase. The Proton acceptor; for 3-dehydroquinate dehydratase activity role is filled by H1162. K1191 acts as the Schiff-base intermediate with substrate; for 3-dehydroquinate dehydratase activity in catalysis. Positions E1271–E1551 are shikimate dehydrogenase.

It in the N-terminal section; belongs to the sugar phosphate cyclases superfamily. Dehydroquinate synthase family. In the 2nd section; belongs to the EPSP synthase family. This sequence in the 3rd section; belongs to the shikimate kinase family. The protein in the 4th section; belongs to the type-I 3-dehydroquinase family. It in the C-terminal section; belongs to the shikimate dehydrogenase family. As to quaternary structure, homodimer. Requires Zn(2+) as cofactor.

The protein resides in the cytoplasm. The enzyme catalyses 7-phospho-2-dehydro-3-deoxy-D-arabino-heptonate = 3-dehydroquinate + phosphate. The catalysed reaction is 3-dehydroquinate = 3-dehydroshikimate + H2O. It carries out the reaction shikimate + NADP(+) = 3-dehydroshikimate + NADPH + H(+). It catalyses the reaction shikimate + ATP = 3-phosphoshikimate + ADP + H(+). The enzyme catalyses 3-phosphoshikimate + phosphoenolpyruvate = 5-O-(1-carboxyvinyl)-3-phosphoshikimate + phosphate. It participates in metabolic intermediate biosynthesis; chorismate biosynthesis; chorismate from D-erythrose 4-phosphate and phosphoenolpyruvate: step 2/7. It functions in the pathway metabolic intermediate biosynthesis; chorismate biosynthesis; chorismate from D-erythrose 4-phosphate and phosphoenolpyruvate: step 3/7. The protein operates within metabolic intermediate biosynthesis; chorismate biosynthesis; chorismate from D-erythrose 4-phosphate and phosphoenolpyruvate: step 4/7. Its pathway is metabolic intermediate biosynthesis; chorismate biosynthesis; chorismate from D-erythrose 4-phosphate and phosphoenolpyruvate: step 5/7. It participates in metabolic intermediate biosynthesis; chorismate biosynthesis; chorismate from D-erythrose 4-phosphate and phosphoenolpyruvate: step 6/7. In terms of biological role, the AROM polypeptide catalyzes 5 consecutive enzymatic reactions in prechorismate polyaromatic amino acid biosynthesis. This Lodderomyces elongisporus (strain ATCC 11503 / CBS 2605 / JCM 1781 / NBRC 1676 / NRRL YB-4239) (Yeast) protein is Pentafunctional AROM polypeptide 1.